Here is a 95-residue protein sequence, read N- to C-terminus: Aspartyl/glutamyl-tRNA(Asn/Gln) amidotransferase subunit C (95 aa).

Belongs to the GatC family. In terms of assembly, heterotrimer of A, B and C subunits.

The catalysed reaction is L-glutamyl-tRNA(Gln) + L-glutamine + ATP + H2O = L-glutaminyl-tRNA(Gln) + L-glutamate + ADP + phosphate + H(+). The enzyme catalyses L-aspartyl-tRNA(Asn) + L-glutamine + ATP + H2O = L-asparaginyl-tRNA(Asn) + L-glutamate + ADP + phosphate + 2 H(+). In terms of biological role, allows the formation of correctly charged Asn-tRNA(Asn) or Gln-tRNA(Gln) through the transamidation of misacylated Asp-tRNA(Asn) or Glu-tRNA(Gln) in organisms which lack either or both of asparaginyl-tRNA or glutaminyl-tRNA synthetases. The reaction takes place in the presence of glutamine and ATP through an activated phospho-Asp-tRNA(Asn) or phospho-Glu-tRNA(Gln). This chain is Aspartyl/glutamyl-tRNA(Asn/Gln) amidotransferase subunit C, found in Thermoanaerobacter pseudethanolicus (strain ATCC 33223 / 39E) (Clostridium thermohydrosulfuricum).